Here is a 362-residue protein sequence, read N- to C-terminus: tRNA-specific 2-thiouridylase MnmA 3 (362 aa).

ATP is bound by residues 11 to 18 and Met37; that span reads GMSGGIDS. Catalysis depends on Cys91, which acts as the Nucleophile. Cysteines 91 and 188 form a disulfide. Position 115 (Gly115) interacts with ATP. The tract at residues 137–139 is interaction with tRNA; it reads KDQ. Residue Cys188 is the Cysteine persulfide intermediate of the active site. The interval 296-297 is interaction with tRNA; sequence RY.

This sequence belongs to the MnmA/TRMU family.

The protein localises to the cytoplasm. The catalysed reaction is S-sulfanyl-L-cysteinyl-[protein] + uridine(34) in tRNA + AH2 + ATP = 2-thiouridine(34) in tRNA + L-cysteinyl-[protein] + A + AMP + diphosphate + H(+). Catalyzes the 2-thiolation of uridine at the wobble position (U34) of tRNA, leading to the formation of s(2)U34. The protein is tRNA-specific 2-thiouridylase MnmA 3 of Bacteroides fragilis (strain YCH46).